The primary structure comprises 437 residues: Methylenetetrahydrofolate--tRNA-(uracil-5-)-methyltransferase TrmFO (437 aa).

10–15 contributes to the FAD binding site; it reads GAGLAG.

This sequence belongs to the MnmG family. TrmFO subfamily. FAD is required as a cofactor.

The protein resides in the cytoplasm. The catalysed reaction is uridine(54) in tRNA + (6R)-5,10-methylene-5,6,7,8-tetrahydrofolate + NADH + H(+) = 5-methyluridine(54) in tRNA + (6S)-5,6,7,8-tetrahydrofolate + NAD(+). The enzyme catalyses uridine(54) in tRNA + (6R)-5,10-methylene-5,6,7,8-tetrahydrofolate + NADPH + H(+) = 5-methyluridine(54) in tRNA + (6S)-5,6,7,8-tetrahydrofolate + NADP(+). In terms of biological role, catalyzes the folate-dependent formation of 5-methyl-uridine at position 54 (M-5-U54) in all tRNAs. The polypeptide is Methylenetetrahydrofolate--tRNA-(uracil-5-)-methyltransferase TrmFO (Lysinibacillus sphaericus (strain C3-41)).